A 120-amino-acid polypeptide reads, in one-letter code: Ribonuclease P protein component (120 aa).

The protein belongs to the RnpA family. Consists of a catalytic RNA component (M1 or rnpB) and a protein subunit.

The catalysed reaction is Endonucleolytic cleavage of RNA, removing 5'-extranucleotides from tRNA precursor.. Functionally, RNaseP catalyzes the removal of the 5'-leader sequence from pre-tRNA to produce the mature 5'-terminus. It can also cleave other RNA substrates such as 4.5S RNA. The protein component plays an auxiliary but essential role in vivo by binding to the 5'-leader sequence and broadening the substrate specificity of the ribozyme. This is Ribonuclease P protein component from Chlamydia trachomatis serovar D (strain ATCC VR-885 / DSM 19411 / UW-3/Cx).